Consider the following 188-residue polypeptide: Elongation factor P (188 aa).

This sequence belongs to the elongation factor P family.

It localises to the cytoplasm. It functions in the pathway protein biosynthesis; polypeptide chain elongation. Involved in peptide bond synthesis. Stimulates efficient translation and peptide-bond synthesis on native or reconstituted 70S ribosomes in vitro. Probably functions indirectly by altering the affinity of the ribosome for aminoacyl-tRNA, thus increasing their reactivity as acceptors for peptidyl transferase. The protein is Elongation factor P of Rhodopseudomonas palustris (strain BisB5).